A 428-amino-acid chain; its full sequence is 3-phosphoshikimate 1-carboxyvinyltransferase (428 aa).

3-phosphoshikimate-binding residues include K23, S24, and R28. K23 lines the phosphoenolpyruvate pocket. Phosphoenolpyruvate is bound by residues G97 and R125. 7 residues coordinate 3-phosphoshikimate: S170, S171, Q172, S198, D314, N337, and K341. Residue Q172 coordinates phosphoenolpyruvate. Residue D314 is the Proton acceptor of the active site. Residues R345, R387, and K412 each coordinate phosphoenolpyruvate.

It belongs to the EPSP synthase family. In terms of assembly, monomer.

Its subcellular location is the cytoplasm. The catalysed reaction is 3-phosphoshikimate + phosphoenolpyruvate = 5-O-(1-carboxyvinyl)-3-phosphoshikimate + phosphate. Its pathway is metabolic intermediate biosynthesis; chorismate biosynthesis; chorismate from D-erythrose 4-phosphate and phosphoenolpyruvate: step 6/7. Catalyzes the transfer of the enolpyruvyl moiety of phosphoenolpyruvate (PEP) to the 5-hydroxyl of shikimate-3-phosphate (S3P) to produce enolpyruvyl shikimate-3-phosphate and inorganic phosphate. This Hamiltonella defensa subsp. Acyrthosiphon pisum (strain 5AT) protein is 3-phosphoshikimate 1-carboxyvinyltransferase.